The sequence spans 229 residues: MGQKVNPIGLRLGINRNWESRWFPDFNKMPERVEEDNKIRKFLKKELYYAGISNIIIERTAKKLRVTIVAARPGIIIGKKGADIEKLKQKLQKLVGKEVFINIKEEKRPQASAQLAAENVATQLERRVAFRRAMKKVIQAAQKAGVKGIKVQVAGRLGGAEMARTEWYLEGRVPLHTLRAKIDYGFAEAHTTYGVIGVKVWIFKGEVLQKGIRPEPTERPRRRAPRRRS.

The KH type-2 domain maps to 39-107; that stretch reads IRKFLKKELY…EVFINIKEEK (69 aa).

It belongs to the universal ribosomal protein uS3 family. Part of the 30S ribosomal subunit. Forms a tight complex with proteins S10 and S14.

In terms of biological role, binds the lower part of the 30S subunit head. Binds mRNA in the 70S ribosome, positioning it for translation. This is Small ribosomal subunit protein uS3 from Nitratiruptor sp. (strain SB155-2).